The sequence spans 350 residues: Ion-translocating oxidoreductase complex subunit D (350 aa).

A run of 4 helical transmembrane segments spans residues 20-40 (VMLW…LFFG), 42-62 (GNLI…AAFL), 89-109 (LPQF…IVVA), and 120-140 (PFNP…VAMT). The residue at position 178 (Thr178) is an FMN phosphoryl threonine. Transmembrane regions (helical) follow at residues 204–224 (LIAR…VLLI), 228–248 (IITW…SLAF), 255–275 (YAPL…FFIA), 282–302 (ATSH…VYLI), and 306–326 (GNYP…VPFI).

It belongs to the NqrB/RnfD family. In terms of assembly, the complex is composed of six subunits: RnfA, RnfB, RnfC, RnfD, RnfE and RnfG. FMN serves as cofactor.

It localises to the cell inner membrane. Its function is as follows. Part of a membrane-bound complex that couples electron transfer with translocation of ions across the membrane. The protein is Ion-translocating oxidoreductase complex subunit D of Marinobacter nauticus (strain ATCC 700491 / DSM 11845 / VT8) (Marinobacter aquaeolei).